The primary structure comprises 393 residues: Putative bacilysin exporter BacE (393 aa).

Transmembrane regions (helical) follow at residues 11 to 31, 43 to 63, 69 to 89, 92 to 112, 133 to 155, 160 to 177, 215 to 235, 244 to 264, 287 to 307, and 353 to 373; these read LLFG…ALLI, SGVI…GVLV, VKIM…LTFL, GEYP…GVFF, LFAK…FLLG, LAVA…FFIS, MFTM…FPIV, IGNF…AALV, ALFL…LFFI, and IVDA…LFLH.

Belongs to the major facilitator superfamily.

The protein resides in the cell membrane. Functionally, part of the bacilysin biosynthesis operon. May be involved in self-resistance to bacilysin by permitting efflux of this antibiotic. The sequence is that of Putative bacilysin exporter BacE (bacE) from Bacillus amyloliquefaciens (Bacillus velezensis).